The chain runs to 213 residues: Golgi SNAP receptor complex member 2 homolog memb-1 (213 aa).

Topologically, residues 1–189 (MEALYQSTNF…QVIDRRVRED (189 aa)) are cytoplasmic. The chain crosses the membrane as a helical; Anchor for type IV membrane protein span at residues 190 to 210 (WILFVIGCIVCCIFMYAFYRF). Residues 211-213 (WRG) are Vesicular-facing.

Belongs to the GOSR2 family. In terms of assembly, part of a unique SNARE complex.

The protein resides in the golgi apparatus. The protein localises to the cis-Golgi network membrane. It localises to the golgi apparatus membrane. Its subcellular location is the endoplasmic reticulum membrane. Its function is as follows. Involved in transport of proteins from the cis/medial-Golgi to the trans-Golgi network. The sequence is that of Golgi SNAP receptor complex member 2 homolog memb-1 from Caenorhabditis elegans.